We begin with the raw amino-acid sequence, 241 residues long: Large ribosomal subunit protein uL3 (241 aa).

The protein belongs to the universal ribosomal protein uL3 family. In terms of assembly, part of the 50S ribosomal subunit. Forms a cluster with proteins L14 and L19.

One of the primary rRNA binding proteins, it binds directly near the 3'-end of the 23S rRNA, where it nucleates assembly of the 50S subunit. This chain is Large ribosomal subunit protein uL3, found in Aquifex aeolicus (strain VF5).